The sequence spans 1437 residues: Protein SUPPRESSOR OF npr1-1, CONSTITUTIVE 1 (1437 aa).

Met-1 carries the post-translational modification N-acetylmethionine. Residues 19 to 182 (RRYDVFPSFR…ELAEDVLRKT (164 aa)) enclose the TIR domain. NAD(+) is bound at residue 28 to 33 (RGEDVR). The active site involves Glu-93. 23 LRR repeats span residues 554–576 (MRNL…VYLP), 577–598 (LKLR…TFKA), 600–621 (YLVN…TLPL), 622–645 (GSLK…SLAI), 647–668 (LEEL…IQNA), 670–691 (KLIY…DLNL), 692–715 (ESLE…KMGC), 781–805 (LGSL…SKAT), 807–828 (LESL…IGNL), 829–851 (HRLV…DVNL), 852–875 (SSLE…STNI), 877–895 (WLYL…IGNL), 897–918 (RLVR…DVNL), 919–939 (SSLE…PLIS), 940–962 (ESIK…SKAT), 964–985 (LKNL…IGNL), 1009–1029 (SSLM…PLIS), 1030–1052 (TNIV…IGNL), 1054–1075 (RLVK…DVNL), 1076–1096 (SSLM…PLIS), 1097–1121 (TRIE…DFTR), 1123–1143 (TVLM…IFRL), and 1161–1185 (LSDA…NIEY).

The protein belongs to the disease resistance TIR-NB-LRR family. As to quaternary structure, homodimer. Interacts (via TIR domain) with TPR1. Interacts with EDS1. Interacts with SRFR1. Interacts with HSP90-3. Binds to MORC1/CRT1. Interacts with TRAF1B. In terms of processing, met-1 is specifically acetylated by N-terminal acetyltransferase complex A (NatA). The NatA-mediated acetylation serves as a degradation signal. Met-1 is specifically acetylated by N-terminal acetyltransferase complex B (NatB). The NatB-mediated acetylation stabilizes SNC1. In terms of tissue distribution, expressed in guard cells and epidermal cells, but not detected in mesophyll cells.

Its subcellular location is the cytoplasm. The protein localises to the microsome. It localises to the nucleus. The catalysed reaction is NAD(+) + H2O = ADP-D-ribose + nicotinamide + H(+). Its function is as follows. Disease resistance protein of the TIR-NB-LRR-type. Part of the RPP5 locus that contains a cluster of several paralogous disease resistance (R) genes. Resistance proteins guard the plant against pathogens that contain an appropriate avirulence protein via an indirect interaction with this avirulence protein. That triggers a defense system including the hypersensitive response, which restricts the pathogen growth. Probably acts as a NAD(+) hydrolase (NADase): in response to activation, catalyzes cleavage of NAD(+) into ADP-D-ribose (ADPR) and nicotinamide; NAD(+) cleavage triggering a defense system that promotes cell death. Expression regulated by MOS1 at chromatin level. Nuclear localization of SNC1 is essential for its activity. ABA deficiency can rescue high-temperature inhibition of SNC1-mediated defense responses. This chain is Protein SUPPRESSOR OF npr1-1, CONSTITUTIVE 1, found in Arabidopsis thaliana (Mouse-ear cress).